Consider the following 388-residue polypeptide: MTTISDLSDDLVGDILSRVPFTSLISVRSTCKKWNALSKNQIFGRKTAARNQFLEFMILDSRVCSLRLDLQGIRNEDKEDFVDPSMKLISIPSNDDQVEISQVYHCDGLLLCIAKENSNVFVWNPYLGQTKWIRPRNTFHRYDRFALGYDNNRNHKILRFLYDEESNESSRRTHIDVYDFSSDSWRVLDVNPDCDIPFYQTGVSLKGNTYFFGQEVTQATKVTEIETCLLCFDFTTERFGPCLPLLFYPPCPSFETVTLSWVRDEKLAVLYNHYVTAEIIEIRISTKIEPNAVSWSSFLTVDMSLVNGLPDHFSMYFEAKSFFIDEEKKVVVLFDSKEIKTCRYQMAYIVGDDGYFKSVNIGVSPNSQRKPGRLVCSSYVPSLVQLQD.

One can recognise an F-box domain in the interval 1–47 (MTTISDLSDDLVGDILSRVPFTSLISVRSTCKKWNALSKNQIFGRKT).

The sequence is that of F-box protein At3g49510 from Arabidopsis thaliana (Mouse-ear cress).